A 122-amino-acid polypeptide reads, in one-letter code: Immunoglobulin lambda variable 4-3 (122 aa).

The signal sequence occupies residues 1–19; sequence MAWVSFYLLPFIFSTGLCA. Positions 20–44 are framework-1; the sequence is LPVLTQPPSASALLGASIKLTCTLS. Positions 21 to 122 constitute an Ig-like domain; the sequence is PVLTQPPSAS…ESHTIDGQVG (102 aa). An intrachain disulfide couples Cys-41 to Cys-111. The tract at residues 45-51 is complementarity-determining-1; it reads SEHSTYT. The segment at 52–68 is framework-2; sequence IEWYQQRPGRSPQYIMK. The segment at 69-75 is complementarity-determining-2; that stretch reads VKSDGSH. The tract at residues 76–111 is framework-3; that stretch reads SKGDGIPDRFMGSSSGADRYLTFSNLQSDDEAEYHC. Positions 112-122 are complementarity-determining-3; the sequence is GESHTIDGQVG.

Immunoglobulins are composed of two identical heavy chains and two identical light chains; disulfide-linked.

Its subcellular location is the secreted. It is found in the cell membrane. V region of the variable domain of immunoglobulin light chains that participates in the antigen recognition. Immunoglobulins, also known as antibodies, are membrane-bound or secreted glycoproteins produced by B lymphocytes. In the recognition phase of humoral immunity, the membrane-bound immunoglobulins serve as receptors which, upon binding of a specific antigen, trigger the clonal expansion and differentiation of B lymphocytes into immunoglobulins-secreting plasma cells. Secreted immunoglobulins mediate the effector phase of humoral immunity, which results in the elimination of bound antigens. The antigen binding site is formed by the variable domain of one heavy chain, together with that of its associated light chain. Thus, each immunoglobulin has two antigen binding sites with remarkable affinity for a particular antigen. The variable domains are assembled by a process called V-(D)-J rearrangement and can then be subjected to somatic hypermutations which, after exposure to antigen and selection, allow affinity maturation for a particular antigen. The sequence is that of Immunoglobulin lambda variable 4-3 from Homo sapiens (Human).